Consider the following 439-residue polypeptide: Cysteine--tRNA ligase (439 aa).

Residue Cys-26 coordinates Zn(2+). A 'HIGH' region motif is present at residues 28–38; that stretch reads PTVYNHVHIGN. Zn(2+)-binding residues include Cys-206, His-231, and Glu-235. The 'KMSKS' region motif lies at 263–267; that stretch reads KMSKS. Residue Lys-266 participates in ATP binding.

It belongs to the class-I aminoacyl-tRNA synthetase family. In terms of assembly, monomer. Zn(2+) serves as cofactor.

The protein localises to the cytoplasm. The catalysed reaction is tRNA(Cys) + L-cysteine + ATP = L-cysteinyl-tRNA(Cys) + AMP + diphosphate. This is Cysteine--tRNA ligase from Malacoplasma penetrans (strain HF-2) (Mycoplasma penetrans).